A 747-amino-acid polypeptide reads, in one-letter code: Meprin A subunit alpha (747 aa).

Residues 1 to 20 (MLWIQPACLLSLIFSAHIAA) form the signal peptide. Positions 21 to 64 (VSIKHLLNGSDHDTDVGEQKDIFEINLAAGLNLFQGDILLPRTR) are excised as a propeptide. Residues asparagine 28 and asparagine 139 are each glycosylated (N-linked (GlcNAc...) asparagine). A Peptidase M12A domain is found at 65–259 (NAMRDPSSRW…IRLNRMYNCT (195 aa)). Residues 65-713 (NAMRDPSSRW…FYAGERCQAM (649 aa)) are Extracellular-facing. 3 disulfide bridges follow: cysteine 106–cysteine 258, cysteine 127–cysteine 146, and cysteine 268–cysteine 430. Histidine 154 is a Zn(2+) binding site. Residue glutamate 155 is part of the active site. Residues histidine 158 and histidine 164 each contribute to the Zn(2+) site. Residues asparagine 221, asparagine 257, asparagine 317, asparagine 413, asparagine 439, asparagine 533, and asparagine 540 are each glycosylated (N-linked (GlcNAc...) asparagine). The MAM domain maps to 263–432 (TLLDHCDFEK…ITLTETPCPA (170 aa)). An MATH domain is found at 433–594 (GVWTIRNISQ…GDSLIIFVDF (162 aa)). The interval 638-663 (ESLPSSLGQRHPSRQKRSVENTGPME) is disordered. The EGF-like domain occupies 671-711 (FRDPCDPNPCQNEGTCVNVKGMASCRCVSGHAFFYAGERCQ). Disulfide bonds link cysteine 675–cysteine 686, cysteine 680–cysteine 695, and cysteine 697–cysteine 710. Residues 714–741 (HVHGSLLGLLIGCIAGLIFLTFVTFSTT) traverse the membrane as a helical segment. The Cytoplasmic segment spans residues 742 to 747 (NGKLRQ).

In terms of assembly, homotetramer consisting of disulfide-linked alpha subunits, homooligomer consisting of disulfide-linked alpha subunit homodimers, or heterotetramer of two alpha and two beta subunits formed by non-covalent association of two disulfide-linked heterodimers. Genetic factors determine which oligomer(s) will be formed (strain-specific). Interacts with MBL2 through its carbohydrate moiety. This interaction may inhibit its catalytic activity. Zn(2+) serves as cofactor. Post-translationally, N-glycosylated; contains GlcNAc, galactose, mannose and a small amount of fucose. Kidney, intestinal brush borders and salivary ducts.

The protein localises to the membrane. The catalysed reaction is Hydrolysis of protein and peptide substrates preferentially on carboxyl side of hydrophobic residues.. Its activity is regulated as follows. Inhibited by metal ion chelators EDTA and 1,10-phenanthroline, bradykinin analogs, cysteine, CONA65, and several hydroxamate compounds, particularly tyrosine hydroxamate. Not inhibited by 3,4-dichloroisocourmarin, soybean trypsin inhibitor, or the cysteine proteinase inhibitors iodoacetic acid and E-64. This Mus musculus (Mouse) protein is Meprin A subunit alpha (Mep1a).